Consider the following 287-residue polypeptide: Bifunctional protein FolD 2 (287 aa).

NADP(+)-binding positions include 166-168 (GAS) and Ile232.

The protein belongs to the tetrahydrofolate dehydrogenase/cyclohydrolase family. As to quaternary structure, homodimer.

It carries out the reaction (6R)-5,10-methylene-5,6,7,8-tetrahydrofolate + NADP(+) = (6R)-5,10-methenyltetrahydrofolate + NADPH. The enzyme catalyses (6R)-5,10-methenyltetrahydrofolate + H2O = (6R)-10-formyltetrahydrofolate + H(+). It participates in one-carbon metabolism; tetrahydrofolate interconversion. Catalyzes the oxidation of 5,10-methylenetetrahydrofolate to 5,10-methenyltetrahydrofolate and then the hydrolysis of 5,10-methenyltetrahydrofolate to 10-formyltetrahydrofolate. This Hydrogenovibrio crunogenus (strain DSM 25203 / XCL-2) (Thiomicrospira crunogena) protein is Bifunctional protein FolD 2.